The following is a 205-amino-acid chain: Thiamine-phosphate synthase (205 aa).

Residues 35–39 (QYRDK) and N67 contribute to the 4-amino-2-methyl-5-(diphosphooxymethyl)pyrimidine site. The Mg(2+) site is built by D68 and D86. Residue T105 coordinates 4-amino-2-methyl-5-(diphosphooxymethyl)pyrimidine. 2-[(2R,5Z)-2-carboxy-4-methylthiazol-5(2H)-ylidene]ethyl phosphate is bound at residue 132 to 134 (SLT). K135 contacts 4-amino-2-methyl-5-(diphosphooxymethyl)pyrimidine. 2-[(2R,5Z)-2-carboxy-4-methylthiazol-5(2H)-ylidene]ethyl phosphate is bound at residue G162.

This sequence belongs to the thiamine-phosphate synthase family. Requires Mg(2+) as cofactor.

It catalyses the reaction 2-[(2R,5Z)-2-carboxy-4-methylthiazol-5(2H)-ylidene]ethyl phosphate + 4-amino-2-methyl-5-(diphosphooxymethyl)pyrimidine + 2 H(+) = thiamine phosphate + CO2 + diphosphate. It carries out the reaction 2-(2-carboxy-4-methylthiazol-5-yl)ethyl phosphate + 4-amino-2-methyl-5-(diphosphooxymethyl)pyrimidine + 2 H(+) = thiamine phosphate + CO2 + diphosphate. The catalysed reaction is 4-methyl-5-(2-phosphooxyethyl)-thiazole + 4-amino-2-methyl-5-(diphosphooxymethyl)pyrimidine + H(+) = thiamine phosphate + diphosphate. Its pathway is cofactor biosynthesis; thiamine diphosphate biosynthesis; thiamine phosphate from 4-amino-2-methyl-5-diphosphomethylpyrimidine and 4-methyl-5-(2-phosphoethyl)-thiazole: step 1/1. Condenses 4-methyl-5-(beta-hydroxyethyl)thiazole monophosphate (THZ-P) and 2-methyl-4-amino-5-hydroxymethyl pyrimidine pyrophosphate (HMP-PP) to form thiamine monophosphate (TMP). The sequence is that of Thiamine-phosphate synthase from Pseudomonas savastanoi pv. phaseolicola (strain 1448A / Race 6) (Pseudomonas syringae pv. phaseolicola (strain 1448A / Race 6)).